The primary structure comprises 701 residues: Nucleolar transcription factor 1-B (701 aa).

The tract at residues 1–21 (MNGAAGGDTQGKMTAPKDQDQ) is disordered. 5 consecutive DNA-binding regions (HMG box) follow at residues 112-180 (PKKP…AKFR), 196-264 (PEKP…REYM), 298-362 (TKPP…MRFL), 422-489 (PETP…SDMR), and 508-574 (KKAP…DTWM). The interval 382 to 426 (MKRKRTNTPASKMATEDAAKVKSRSGQADKKKAAEERAKLPETPK) is disordered. Residues 408–426 (QADKKKAAEERAKLPETPK) show a composition bias toward basic and acidic residues. Residues 584-701 (AYKEQNTNKR…SADSSDSDSN (118 aa)) are disordered. Positions 597-612 (TKIQAPSSKSKLVIQS) are enriched in polar residues. A compositionally biased stretch (acidic residues) spans 615 to 682 (DDDEDDEDDE…DNEEDDDDNE (68 aa)). The span at 683–695 (SGSSSSSSSSADS) shows a compositional bias: low complexity.

In terms of assembly, XUBF consists of 2 polypeptides of 82 and 85 kDa, encoded by the same or closely related genes.

The protein localises to the nucleus. UBF recognizes the ribosomal RNA gene promotor and activates transcription mediated by RNA polymerase I through cooperative interactions with the species-specific factor SL1. It binds specifically to the upstream control element. This Xenopus laevis (African clawed frog) protein is Nucleolar transcription factor 1-B (ubtf-b).